The chain runs to 90 residues: UPF0237 protein NMB1653 (90 aa).

The region spanning 5–83 is the ACT domain; that stretch reads VITVIGKDRV…LDIRMQNEEI (79 aa).

This sequence belongs to the UPF0237 family.

This is UPF0237 protein NMB1653 from Neisseria meningitidis serogroup B (strain ATCC BAA-335 / MC58).